The sequence spans 271 residues: Meiotic drive suppressor wtf35 (271 aa).

Disordered regions lie at residues 1-24 (MKNN…DHEI) and 54-75 (TVPE…ERRQ). The segment covering 57-69 (EDSSTGPTETANP) has biased composition (polar residues). 4 consecutive transmembrane segments (helical) span residues 90–110 (LLIS…CVNP), 120–140 (AFSV…FCFF), 176–196 (WENM…VGSP), and 213–233 (SLAE…AETV).

This sequence belongs to the WTF family. As to quaternary structure, homomer. Interacts with other proteins that exhibit high sequence similarity.

It localises to the spore membrane. It is found in the vacuole membrane. In terms of biological role, acts as a suppressor component of the dual wtf meiotic drive system, and can suppress but not confer meiotic drive by compatible poisons. Wtf meiotic drive systems promote unequal transmission of alleles from the parental zygote to progeny spores by encoding a poison and an antidote from the same locus; the poison is trans-acting and forms toxic aggregates in all spores within an ascus, wherease the antidote is spore-specific and targets aggregates for degradation by the vacuole. Meiotic drive by wtf systems therefore lead to poisoning of all progeny that do not inherit the dual poison/antidote allele, or express a compatible antidote. This chain is Meiotic drive suppressor wtf35, found in Schizosaccharomyces kambucha (Fission yeast).